A 460-amino-acid chain; its full sequence is Bifunctional protein GlmU (460 aa).

A pyrophosphorylase region spans residues methionine 1–leucine 228. UDP-N-acetyl-alpha-D-glucosamine-binding positions include leucine 8 to glycine 11, lysine 22, glutamine 72, and glycine 77 to threonine 78. Aspartate 102 provides a ligand contact to Mg(2+). Residues glycine 139, glutamate 154, asparagine 169, and asparagine 226 each contribute to the UDP-N-acetyl-alpha-D-glucosamine site. Position 226 (asparagine 226) interacts with Mg(2+). Residues tyrosine 229–asparagine 249 form a linker region. Residues glycine 250–glutamate 460 form an N-acetyltransferase region. UDP-N-acetyl-alpha-D-glucosamine is bound by residues arginine 331 and lysine 349. Histidine 361 acts as the Proton acceptor in catalysis. 2 residues coordinate UDP-N-acetyl-alpha-D-glucosamine: tyrosine 364 and asparagine 375. Acetyl-CoA-binding positions include asparagine 384–tyrosine 385, alanine 421, and arginine 438.

In the N-terminal section; belongs to the N-acetylglucosamine-1-phosphate uridyltransferase family. It in the C-terminal section; belongs to the transferase hexapeptide repeat family. As to quaternary structure, homotrimer. Requires Mg(2+) as cofactor.

It is found in the cytoplasm. The enzyme catalyses alpha-D-glucosamine 1-phosphate + acetyl-CoA = N-acetyl-alpha-D-glucosamine 1-phosphate + CoA + H(+). It catalyses the reaction N-acetyl-alpha-D-glucosamine 1-phosphate + UTP + H(+) = UDP-N-acetyl-alpha-D-glucosamine + diphosphate. Its pathway is nucleotide-sugar biosynthesis; UDP-N-acetyl-alpha-D-glucosamine biosynthesis; N-acetyl-alpha-D-glucosamine 1-phosphate from alpha-D-glucosamine 6-phosphate (route II): step 2/2. The protein operates within nucleotide-sugar biosynthesis; UDP-N-acetyl-alpha-D-glucosamine biosynthesis; UDP-N-acetyl-alpha-D-glucosamine from N-acetyl-alpha-D-glucosamine 1-phosphate: step 1/1. It functions in the pathway bacterial outer membrane biogenesis; LPS lipid A biosynthesis. Catalyzes the last two sequential reactions in the de novo biosynthetic pathway for UDP-N-acetylglucosamine (UDP-GlcNAc). The C-terminal domain catalyzes the transfer of acetyl group from acetyl coenzyme A to glucosamine-1-phosphate (GlcN-1-P) to produce N-acetylglucosamine-1-phosphate (GlcNAc-1-P), which is converted into UDP-GlcNAc by the transfer of uridine 5-monophosphate (from uridine 5-triphosphate), a reaction catalyzed by the N-terminal domain. This is Bifunctional protein GlmU from Acholeplasma laidlawii (strain PG-8A).